We begin with the raw amino-acid sequence, 216 residues long: Uracil phosphoribosyltransferase (216 aa).

Residues Arg-29–Lys-30 and Arg-37 each bind CTP. Lys-30–Arg-34 provides a ligand contact to GTP. Arg-80 contacts 5-phospho-alpha-D-ribose 1-diphosphate. Glu-87–Ala-96 contacts CTP. 5-phospho-alpha-D-ribose 1-diphosphate is bound by residues Arg-105 and Asp-140–Thr-148. Uracil contacts are provided by residues Ile-203 and Gly-208 to Ala-210. Asp-209 is a 5-phospho-alpha-D-ribose 1-diphosphate binding site.

This sequence belongs to the UPRTase family. Homotetramer. Mg(2+) is required as a cofactor.

It carries out the reaction UMP + diphosphate = 5-phospho-alpha-D-ribose 1-diphosphate + uracil. It participates in pyrimidine metabolism; UMP biosynthesis via salvage pathway; UMP from uracil: step 1/1. Its activity is regulated as follows. Allosterically activated by GTP. Inhibited by CTP and UMP in combination. Catalyzes the conversion of uracil and 5-phospho-alpha-D-ribose 1-diphosphate (PRPP) to UMP and diphosphate. The protein is Uracil phosphoribosyltransferase (upp) of Saccharolobus solfataricus (strain ATCC 35092 / DSM 1617 / JCM 11322 / P2) (Sulfolobus solfataricus).